The chain runs to 138 residues: MAKSPPRSGSRRPGRIGSRKSGRRIPKGVIHVQASFNNTIVTVTDVRGRVISWSSAGTCGFRGTRRGTPFAAQTAAGNAIRAVADQGMQRAEVMIKGPGLGRDAALRAIRRSGILLNFVRDVTPMPHNGCRPPKKRRV.

Residues 1 to 24 form a disordered region; that stretch reads MAKSPPRSGSRRPGRIGSRKSGRR. Positions 9-24 are enriched in basic residues; sequence GSRRPGRIGSRKSGRR.

Belongs to the universal ribosomal protein uS11 family. As to quaternary structure, part of the 30S ribosomal subunit.

The protein resides in the plastid. It localises to the chloroplast. The chain is Small ribosomal subunit protein uS11c from Citrus sinensis (Sweet orange).